Consider the following 77-residue polypeptide: Large ribosomal subunit protein bL28 (77 aa).

This sequence belongs to the bacterial ribosomal protein bL28 family.

This Polynucleobacter asymbioticus (strain DSM 18221 / CIP 109841 / QLW-P1DMWA-1) (Polynucleobacter necessarius subsp. asymbioticus) protein is Large ribosomal subunit protein bL28.